The chain runs to 224 residues: Probable GTP-binding protein EngB (224 aa).

The region spanning 27 to 201 (SGIEVAFAGR…DAIICQWLEQ (175 aa)) is the EngB-type G domain. Residues 35-42 (GRSNAGKS), 62-66 (GRTQL), 80-83 (DLPG), 147-150 (TKCD), and 180-182 (FSS) contribute to the GTP site. Mg(2+) contacts are provided by Ser42 and Thr64. The interval 205–224 (EYELPEEDDFDDSDEFTEEE) is disordered.

This sequence belongs to the TRAFAC class TrmE-Era-EngA-EngB-Septin-like GTPase superfamily. EngB GTPase family. The cofactor is Mg(2+).

In terms of biological role, necessary for normal cell division and for the maintenance of normal septation. The sequence is that of Probable GTP-binding protein EngB from Colwellia psychrerythraea (strain 34H / ATCC BAA-681) (Vibrio psychroerythus).